A 1340-amino-acid polypeptide reads, in one-letter code: TSET complex member tstE (1340 aa).

Over residues 56–67 (NQSQTSPNSNDG) the composition is skewed to low complexity. Disordered regions lie at residues 56–75 (NQSQTSPNSNDGNIGGGSGG) and 110–131 (SGSGGGGSGSNSNIGGGGGGGQ). WD repeat units lie at residues 208-246 (VNQILFNCLCFHPKSPILYAAIRNEVHFYDIITKSVIGK), 250-294 (DPTE…LQTI), 345-384 (GHKKPISAIAHHPAKTILASCSTDGQLKIWDTRNNMSFLN), and 397-436 (IEHSNHYFLVFEPTGKYLVMTGSSGLTLVYGDLTSQNPQE). The span at 1216 to 1251 (KSHMSSTTTLRRSPSIENIRTTSTTFDSSKFNTDNQ) shows a compositional bias: polar residues. Positions 1216 to 1340 (KSHMSSTTTL…TPTPTTTLSS (125 aa)) are disordered. Over residues 1252 to 1275 (ELFDDDSDDDSDSGADADVDSENE) the composition is skewed to acidic residues. Residues 1286-1318 (ASLQHNDNSSLTNITVTDNDSNLDQDITSNTGS) are compositionally biased toward polar residues. Residues 1328–1340 (LSSTPTPTTTLSS) are compositionally biased toward low complexity.

As to quaternary structure, component of the TSET complex, a heterohexamer composed of tstA, tstB, tstC, tstD, tstE and tstF, which may act in plasma membrane turnover. tstA, tstB, tstC and tstD are likely to be the core complex members with tstE and tstF acting as associated scaffold proteins.

The chain is TSET complex member tstE from Dictyostelium discoideum (Social amoeba).